The sequence spans 607 residues: MPMFPEKILQSTPHKPGVYLMLDAKARVIYVGKAKDLVKRLTSYTRHSSSEHNKTTVMLKKVEQVKTIITTTEKEALILEASLIKKHKPRYNIILRDDKNYPYIAVTVGEEWPRVMMVRRKRRDNSRYFGPYSSATAMWATLKLIASLFPLRNCRGEKLRPRTRPCLNRQIGKCLAPCTGNVSRKIYMENVDKILLLLQGKSRDLLAELKRQMLQASERLNFEQAGQFRDQIRALKTTLEKQLVAAGHGKNQDVFGYVRSGTTVAVNILFVRDGLVSGSRSFFIEDYFGLDSQVLSQTISQYYDRETPPPKEILLPFSPENFELLSEYLADFTTHILQIKIPQRGDSTILVEMANTNARQLFAEKEKKERSWQSLGKSIKEKLQLSRTPETIECLDISNISGQHAIGSLVCFSGGEANKSRFRHYKIRTIEGPDDYGMMREVMERRFKRGIKEGNLPNLFVVDGGKGQLGMAMAVARELGITNELDWIGIAKERHEEGEKLYKPGRKNPILLPAHSPVLLYLMRIRDESHRYGITFHRKLRNRATLSSELDEIEGIGDNRKKLLLKKIGSLKKIKEASLQKLQEVEGIGPLLAKKIYTSLQRDKNKS.

A GIY-YIG domain is found at 14 to 93 (HKPGVYLMLD…IKKHKPRYNI (80 aa)). The UVR domain maps to 203-238 (RDLLAELKRQMLQASERLNFEQAGQFRDQIRALKTT).

This sequence belongs to the UvrC family. As to quaternary structure, interacts with UvrB in an incision complex.

The protein localises to the cytoplasm. Its function is as follows. The UvrABC repair system catalyzes the recognition and processing of DNA lesions. UvrC both incises the 5' and 3' sides of the lesion. The N-terminal half is responsible for the 3' incision and the C-terminal half is responsible for the 5' incision. The polypeptide is UvrABC system protein C (Desulfotalea psychrophila (strain LSv54 / DSM 12343)).